The chain runs to 621 residues: KIF-binding protein (621 aa).

Ser178 carries the phosphoserine modification.

The protein belongs to the KIF-binding protein family. Interacts with KIF1B; positively regulates KIF1B microtubule motor activity. Interacts with STMN2.

It is found in the cytoplasm. It localises to the cytoskeleton. Activator of KIF1B plus-end-directed microtubule motor activity. Required for organization of axonal microtubules, and axonal outgrowth and maintenance during peripheral and central nervous system development. The protein is KIF-binding protein (KIFBP) of Bos taurus (Bovine).